A 410-amino-acid polypeptide reads, in one-letter code: Arginine deiminase (410 aa).

The Amidino-cysteine intermediate role is filled by C400.

It belongs to the arginine deiminase family.

The protein resides in the cytoplasm. The catalysed reaction is L-arginine + H2O = L-citrulline + NH4(+). The protein operates within amino-acid degradation; L-arginine degradation via ADI pathway; carbamoyl phosphate from L-arginine: step 1/2. The sequence is that of Arginine deiminase from Lactococcus lactis subsp. cremoris (strain MG1363).